The chain runs to 136 residues: Large ribosomal subunit protein uL16c (136 aa).

The interval 1–20 (MLSPKRTRFRKQHRGRMKGK) is disordered.

It belongs to the universal ribosomal protein uL16 family. As to quaternary structure, part of the 50S ribosomal subunit.

The protein localises to the plastid. The protein resides in the chloroplast. This is Large ribosomal subunit protein uL16c from Agrostis stolonifera (Creeping bentgrass).